The following is a 340-amino-acid chain: MEPGRTHIKLDPRYTAELLELLETNYSISPACFSHPPTAAQLLRALGPVDIALTIILTFLTTGSVAIFLEDAVYLYKNTLCPIKKRTLIWSSSAPTVVSVFCCFGLWIPRALTLVEMAITSFYAVCFYLLMMVMVEGFGGKKAVLRTLKDTPMRVHTGPCCCCCPCCPPLILTRKKLQLLLLGPFQYAFFKITLSIVGLFLIPDGIYDPGEISEKSAALWINNLLAVSTLLALWSLAILFRQAKMHLGEQNMGSKFALFQVLVILTALQPAIFSILANSGQIACSPPYSSKIRSQVMNCHMLILETFLMTVLTRMYYRRKDDKVGYEACSLPDLDSALKA.

Residues 1 to 48 (MEPGRTHIKLDPRYTAELLELLETNYSISPACFSHPPTAAQLLRALGP) lie on the Extracellular side of the membrane. N-linked (GlcNAc...) asparagine glycosylation occurs at N25. A helical transmembrane segment spans residues 49 to 69 (VDIALTIILTFLTTGSVAIFL). Residues 70–87 (EDAVYLYKNTLCPIKKRT) are Cytoplasmic-facing. A helical membrane pass occupies residues 88–108 (LIWSSSAPTVVSVFCCFGLWI). Residues 109 to 114 (PRALTL) are Extracellular-facing. Residues 115 to 135 (VEMAITSFYAVCFYLLMMVMV) form a helical membrane-spanning segment. Residues 136–181 (EGFGGKKAVLRTLKDTPMRVHTGPCCCCCPCCPPLILTRKKLQLLL) lie on the Cytoplasmic side of the membrane. The helical transmembrane segment at 182–202 (LGPFQYAFFKITLSIVGLFLI) threads the bilayer. At 203-219 (PDGIYDPGEISEKSAAL) the chain is on the extracellular side. A helical membrane pass occupies residues 220–240 (WINNLLAVSTLLALWSLAILF). Topologically, residues 241–255 (RQAKMHLGEQNMGSK) are cytoplasmic. Residues 256-276 (FALFQVLVILTALQPAIFSIL) form a helical membrane-spanning segment. Topologically, residues 277–297 (ANSGQIACSPPYSSKIRSQVM) are extracellular. A helical membrane pass occupies residues 298 to 317 (NCHMLILETFLMTVLTRMYY). The Cytoplasmic segment spans residues 318-340 (RRKDDKVGYEACSLPDLDSALKA). Residue S330 is modified to Phosphoserine.

Belongs to the OST-alpha family. As to quaternary structure, interacts with SLC51B. The Ost-alpha/Ost-beta complex is a heterodimer composed of alpha (SLC51A) and beta (SLC51B) subunit. In terms of processing, N-glycosylated. As to expression, present at high levels in ileum. In ileum, it is restricted to the apical domain on the mature villus enterocytes with little detectable expression in the goblet cells or crypt enterocytes (at protein level). Expressed in kidney but not in heart, brain, liver, spleen, embryo, lung, thymus, ovary nor testis.

The protein localises to the cell membrane. It localises to the endoplasmic reticulum membrane. The catalysed reaction is taurocholate(out) = taurocholate(in). It catalyses the reaction tauroursodeoxycholate(out) = tauroursodeoxycholate(in). It carries out the reaction glycoursodeoxycholate(out) = glycoursodeoxycholate(in). The enzyme catalyses glycocholate(out) = glycocholate(in). The catalysed reaction is taurochenodeoxycholate(out) = taurochenodeoxycholate(in). It catalyses the reaction glycochenodeoxycholate(out) = glycochenodeoxycholate(in). It carries out the reaction taurodeoxycholate(out) = taurodeoxycholate(in). The enzyme catalyses glycodeoxycholate(out) = glycodeoxycholate(in). The catalysed reaction is prostaglandin E2(out) = prostaglandin E2(in). It catalyses the reaction estrone 3-sulfate(out) = estrone 3-sulfate(in). It carries out the reaction dehydroepiandrosterone 3-sulfate(out) = dehydroepiandrosterone 3-sulfate(in). Functionally, essential component of the Ost-alpha/Ost-beta complex, a heterodimer that acts as the intestinal basolateral transporter responsible for bile acid export from enterocytes into portal blood. Efficiently transports the major species of bile acids (taurocholate). Taurine conjugates are transported more efficiently across the basolateral membrane than glycine-conjugated bile acids. Can also transport steroids such as estrone 3-sulfate and dehydroepiandrosterone 3-sulfate, therefore playing a role in the enterohepatic circulation of sterols. Able to transport eicosanoids such as prostaglandin E2. This chain is Organic solute transporter subunit alpha (Slc51a), found in Mus musculus (Mouse).